The primary structure comprises 388 residues: Phosphoglycerate kinase (388 aa).

Substrate is bound by residues 21–23 (DLN), Arg36, 59–62 (HLGR), Arg114, and Arg147. Residues Lys198, Glu315, and 341-344 (GGDT) contribute to the ATP site.

This sequence belongs to the phosphoglycerate kinase family. In terms of assembly, monomer.

The protein resides in the cytoplasm. The catalysed reaction is (2R)-3-phosphoglycerate + ATP = (2R)-3-phospho-glyceroyl phosphate + ADP. Its pathway is carbohydrate degradation; glycolysis; pyruvate from D-glyceraldehyde 3-phosphate: step 2/5. The protein is Phosphoglycerate kinase of Hahella chejuensis (strain KCTC 2396).